The chain runs to 388 residues: Endoglucanase 3 (388 aa).

The signal sequence occupies residues 1–16; that stretch reads MKHSVLAGLFATGALA. A CBM1 domain is found at 17–52; it reads QGGAWQQCGGVGFSGSTSCVSGYTCVYLNDWYSQCQ. 2 disulfide bridges follow: C24–C41 and C35–C51. The linker stretch occupies residues 53–91; the sequence is PQPTTLRTTTTPGATSTTRSAPAATSTTPAKGKFKWFGI. Residues 56-81 are disordered; sequence TTLRTTTTPGATSTTRSAPAATSTTP. N-linked (GlcNAc...) asparagine glycosylation is found at N92 and N155. Residues 92-388 are catalytic; that stretch reads NQSCAEFGKG…YNSLLKKYVP (297 aa). E215 acts as the Proton donor in catalysis. N259 is a glycosylation site (N-linked (GlcNAc...) asparagine). Catalysis depends on E322, which acts as the Nucleophile.

Belongs to the glycosyl hydrolase 5 (cellulase A) family.

It carries out the reaction Endohydrolysis of (1-&gt;4)-beta-D-glucosidic linkages in cellulose, lichenin and cereal beta-D-glucans.. The sequence is that of Endoglucanase 3 (CMC3) from Humicola insolens (Soft-rot fungus).